The chain runs to 164 residues: Ion-translocating oxidoreductase complex subunit G (164 aa).

Thr-125 carries the FMN phosphoryl threonine modification.

Belongs to the RnfG family. The complex is composed of six subunits: RnfA, RnfB, RnfC, RnfD, RnfE and RnfG. It depends on FMN as a cofactor.

Its function is as follows. Part of a membrane-bound complex that couples electron transfer with translocation of ions across the membrane. The protein is Ion-translocating oxidoreductase complex subunit G of Buchnera aphidicola subsp. Acyrthosiphon pisum (strain APS) (Acyrthosiphon pisum symbiotic bacterium).